The sequence spans 301 residues: MKIGILSQFPQLYSTQRLVEACQSRGHEAVVINTLNCYMNINSIKPSIHYEGTELVGFDAIIPRIHASVTFYGCAVVRQFEMMGVYAANDSISIARSRDKLRALQLLSRKGIGMPVTGFANKPNDIPDLINMVGGAPLVIKLLEGTQGIGVVLAETKTAAESVIEAFLGLKANILVQEYIKESNGSDIRCFVVGDKVIASMKRQGPEGDFRSNLHLGGCGEVVKITAVERKMAIAAVKAMGLVVAGVDILRSNRGPLILEVNSAPGIEGIEQTTGISVTEPIVEYIEKMVSARKTNRPIIA.

The ATP-grasp domain occupies 104-287; sequence LQLLSRKGIG…VTEPIVEYIE (184 aa). ATP contacts are provided by residues Lys-141, 178–179, Asp-187, and 211–213; these read EY and RSN. Positions 248, 260, and 262 each coordinate Mg(2+). Asp-248, Glu-260, and Asn-262 together coordinate Mn(2+).

Belongs to the RimK family. The cofactor is Mg(2+). Mn(2+) is required as a cofactor.

The polypeptide is Probable alpha-L-glutamate ligase 2 (Shewanella baltica (strain OS195)).